The sequence spans 311 residues: Aspartate carbamoyltransferase catalytic subunit (311 aa).

The carbamoyl phosphate site is built by Arg-59 and Thr-60. Residue Lys-87 coordinates L-aspartate. Carbamoyl phosphate-binding residues include Arg-109, His-139, and Gln-142. L-aspartate-binding residues include Arg-172 and Arg-224. 2 residues coordinate carbamoyl phosphate: Ala-265 and Pro-266.

Belongs to the aspartate/ornithine carbamoyltransferase superfamily. ATCase family. Heterododecamer (2C3:3R2) of six catalytic PyrB chains organized as two trimers (C3), and six regulatory PyrI chains organized as three dimers (R2).

It carries out the reaction carbamoyl phosphate + L-aspartate = N-carbamoyl-L-aspartate + phosphate + H(+). It functions in the pathway pyrimidine metabolism; UMP biosynthesis via de novo pathway; (S)-dihydroorotate from bicarbonate: step 2/3. Functionally, catalyzes the condensation of carbamoyl phosphate and aspartate to form carbamoyl aspartate and inorganic phosphate, the committed step in the de novo pyrimidine nucleotide biosynthesis pathway. This Streptococcus pyogenes serotype M12 (strain MGAS2096) protein is Aspartate carbamoyltransferase catalytic subunit.